The primary structure comprises 419 residues: Histidine--tRNA ligase (419 aa).

This sequence belongs to the class-II aminoacyl-tRNA synthetase family. In terms of assembly, homodimer.

It localises to the cytoplasm. It carries out the reaction tRNA(His) + L-histidine + ATP = L-histidyl-tRNA(His) + AMP + diphosphate + H(+). The protein is Histidine--tRNA ligase of Thermosipho melanesiensis (strain DSM 12029 / CIP 104789 / BI429).